The chain runs to 74 residues: Large ribosomal subunit protein bL31 (74 aa).

It belongs to the bacterial ribosomal protein bL31 family. Type A subfamily. As to quaternary structure, part of the 50S ribosomal subunit.

In terms of biological role, binds the 23S rRNA. In Xanthobacter autotrophicus (strain ATCC BAA-1158 / Py2), this protein is Large ribosomal subunit protein bL31.